A 538-amino-acid chain; its full sequence is MTVLTREKKPYFGLTGGWLTFWVTVACATDMSLFGYDQGVFSGVVITRDFLEVHDLVGPEKTKTLSTVTAIYDVGCFFGAIVAFTIGEQLGRKKAILLGTTIMAIGAVLQAASFSLAQMFVGRIILGIGNGINTATAPIWQTETSQLKWRGKLVIFEMMMNIFGFCLVNWINYGLSFVGGSIAWRFPLAFQFFFLIILWSTTPWLPESPRWLIAHGRQEEATVVLSCLEAKPIDDPFVIAQRNEIEFSVRYERENSMRWRDLCQKKGNDSKTLRRLLLGAGSQFMQQFGGINIMSYYLPTVLMDSVGLSDTMARLLAACNALSYLVFSGLAVLLVERIGRRGLMLLSTFGQFLCFLIITILLRFSRISDNGEKFASASVAFFFLYYGAFGIGMLGVPWLYPTEINSLPMRTKGAAVATATDWITNFVVVEITPIGIKNIDWKFWIVWTVTNAAFLPILYFLYPETANRSLEDMDEYYRSNPALVVTKDPDAICRRRPQKYLQREEEEIERAAAAVDKRALSVGAVEHAEWTNAMGNKS.

Transmembrane regions (helical) follow at residues 14 to 34 (LTGG…MSLF), 67 to 87 (TVTA…FTIG), 96 to 116 (ILLG…SFSL), 120 to 140 (FVGR…APIW), 162 to 182 (IFGF…GGSI), and 186 to 206 (FPLA…PWLP). The N-linked (GlcNAc...) asparagine glycan is linked to Asn-268. 6 helical membrane passes run 288–308 (FGGI…SVGL), 315–335 (LLAA…VLLV), 342–362 (GLML…TILL), 379–399 (VAFF…VPWL), 416–436 (VATA…PIGI), and 443–463 (FWIV…FLYP). N-linked (GlcNAc...) asparagine glycosylation occurs at Asn-467.

This sequence belongs to the major facilitator superfamily. Sugar transporter (TC 2.A.1.1) family.

It localises to the membrane. Its function is as follows. MFS-type transporter; part of the gene cluster that mediates the biosynthesis of oryzines, natural products with an unusual maleidride backbone. The sequence is that of MFS-type transporter oryC from Aspergillus oryzae (strain ATCC 42149 / RIB 40) (Yellow koji mold).